The primary structure comprises 344 residues: MSNAITMGIFWHLIGAASAACFYAPFKQVKQWSWETMWSVGGIVSWLILPWTISALLLPDFWAYYGQFNLSTLLPVFLFGAMWGIGNINYGLTMRYLGMSMGIGIAIGITLIVGTLMTPIINGNFDVLIHTEGGRMTLLGVFVALIGVGIVTRAGQLKERKMGIKAEEFNLKKGLLLAVMCGIFSAGMSFAMNAAKPMHEAAAALGVDPLYVALPSYVVIMGGGALVNLGFCFIRLAKVQNLSIKADFSLARPLIISNILLSALGGLMWYLQFFFYAWGHARIPAQYDYMSWMLHMSFYVLCGGLVGLVLKEWKNAGRRPVAVLSLGCVVIIIAANIVGLGMAS.

Transmembrane regions (helical) follow at residues A4–A24, W38–L58, F68–I88, M101–I121, T137–L157, L175–A195, L214–I234, I259–G279, M290–L310, and V321–G341.

The protein belongs to the L-rhamnose transporter (TC 2.A.7.6) family.

It localises to the cell inner membrane. The catalysed reaction is L-rhamnopyranose(in) + H(+)(in) = L-rhamnopyranose(out) + H(+)(out). Functionally, uptake of L-rhamnose across the cytoplasmic membrane with the concomitant transport of protons into the cell (symport system). The chain is L-rhamnose-proton symporter from Salmonella agona (strain SL483).